The chain runs to 1394 residues: MGVLMTERANLVFHNKVIDGTAMKRLISRLIDHFGMAYTSHILDQVKTLGFQQATATSISLGIDDLLTIPSKGWLVQDAEQQSLILEKHHHYGNVHAVEKLRQSIEIWYATSEYLRQEMNTNFRMTDPFNPVHIMSFSGARGNASQVHQLVGMRGLMSDPQGQMIDLPIQSNLREGLSLTEYIISCYGARKGVVDTAVRTSDAGYLTRRLVEVVQHIVVRRTDCGTIRGISVSPRNGMIPERIFIQTLIGRVLADDIYMGPRCIAIRNQDIGIGLVNRFITFQAQTISIRTPFTCKSTSWICRLCYGRSPTHGDLVELGEAVGIIAGQSIGEPGTQLTLRTFHTGGVFTGGTAEHVRAPSNGKIKFNEDWVHPTRTRHGHPAFLCYIDLYVTIESEGIIHNVNIPPKSFLLVQNDQYVESEQVIAEIRAGTYTFNFKERVRKHIYSDSEGEMHWSTDVYHAPEFTYGNVHLLPKTSHLWILSGGSCRFSIVPFSIHKDQDQMSVRSLSVERRYISNPSVTNDQVIHEFFSSDLSGKKEGRIPAYSELNRIIYTGRYNLIDPAILHENSDLLAKRRRNRFIIPFQSIQEGEKELMPPSGISIEIPINGIFRRNSILAYFDDPRYRRNSSGITKYGTIEAHSIVKKEDLIEYRGVKEFKPKYQMKVDRFFFIPEEVHILPGSASIMVRNNSIIGVDTRITLNTRSRVSGLVRVERKKKRIELKIFSGDIQFPGETNKISRHIGILIPPGTRKKNSKESKKLKNWIYVQGITPTKKKYFVLVRPVVTYEIADGINLATLFPQDLLQERDNMHLQVVNYILYGNGKPIRGISDTSIQLVRTCLVLNWYQEKKSSPIEKTHASFMEVRTNGLIRDFLTINLVKSYISYTGKRNDPSSSGLIADNGSDHTNINPFYSIYPKERIQQLLRQRQKKNQGTIRTLLNRNKECQSLIILSSSNCSRMGPFNDVKYHNVIKESIKKDTPIPIRNSLGPLGTALQITNFYSFYHLITHNHILVTKYFQLDNFKQTFQTLKYYLMDENGITYNPDPCSNIILNPFNLNWYFLHHNYCEETSTIISLGQFICENVCIAKNGPHLKSGQVLIVQVDSVVIRSAKPYLATLGATVHGHYGEILYEGDTLVTFIYEKSRSGDITQGLPKVEQVLEVRSIDSISMNLEKRVEGWNEHITRILGIPWGFFIGAELTIAQSRISLVNKIQKVYRSQGVQIHNRHIEIIVRQITSKVLVSEDGMSNVFSPGELIGLLRAERTGRAFEEAICYRTILLGITRASLNTQSFISEASFQETARVLAKAALWGRIDWLKGLKENVVLGGMIPVGTGFKGLVHRSRQHNNIPLEMETKKNNLFEREMRDILFHHRELFDSCSSKNFHDTSEQSFMGFNDS.

Zn(2+) contacts are provided by cysteine 224, cysteine 295, cysteine 302, and cysteine 305.

This sequence belongs to the RNA polymerase beta' chain family. RpoC2 subfamily. In terms of assembly, in plastids the minimal PEP RNA polymerase catalytic core is composed of four subunits: alpha, beta, beta', and beta''. When a (nuclear-encoded) sigma factor is associated with the core the holoenzyme is formed, which can initiate transcription. Zn(2+) is required as a cofactor.

The protein resides in the plastid. The protein localises to the chloroplast. The enzyme catalyses RNA(n) + a ribonucleoside 5'-triphosphate = RNA(n+1) + diphosphate. Its function is as follows. DNA-dependent RNA polymerase catalyzes the transcription of DNA into RNA using the four ribonucleoside triphosphates as substrates. This chain is DNA-directed RNA polymerase subunit beta'', found in Vitis vinifera (Grape).